The sequence spans 445 residues: Glycerophosphocholine choline phosphodiesterase ENPP6 (445 aa).

Positions 1–22 (MAGKLGVLLLALVLSLAQPASA) are cleaved as a signal peptide. 3 residues coordinate substrate: aspartate 32, serine 71, and asparagine 92. Zn(2+) contacts are provided by aspartate 32 and serine 71. Catalysis depends on serine 71, which acts as the Nucleophile. At serine 71 the chain carries Phosphoserine. Residues asparagine 100 and asparagine 118 are each glycosylated (N-linked (GlcNAc...) asparagine). Cysteine 142 and cysteine 154 are disulfide-bonded. Aspartate 193 serves as a coordination point for substrate. Positions 193, 197, 240, and 241 each coordinate Zn(2+). Residue histidine 241 coordinates substrate. Asparagine 341 carries N-linked (GlcNAc...) asparagine glycosylation. Histidine 356 lines the substrate pocket. Zn(2+) is bound at residue histidine 356. N-linked (GlcNAc...) asparagine glycosylation occurs at asparagine 406. The GPI-anchor amidated serine moiety is linked to residue serine 421. Residues 422–445 (SAPGAPPCACALVTVLLVLLAILA) constitute a propeptide, removed in mature form.

It belongs to the nucleotide pyrophosphatase/phosphodiesterase family. In terms of assembly, homodimer; disulfide-linked. Homotetramer. The cofactor is Zn(2+).

It is found in the cell membrane. The enzyme catalyses sn-glycerol 3-phosphocholine + H2O = phosphocholine + glycerol + H(+). It catalyses the reaction a 1-acyl-sn-glycero-3-phosphocholine + H2O = a 1-acyl-sn-glycerol + phosphocholine + H(+). The catalysed reaction is a 1-O-alkyl-sn-glycero-3-phosphocholine + H2O = a 1-O-alkyl-sn-glycerol + phosphocholine + H(+). It carries out the reaction 1-dodecanoyl-sn-glycero-3-phosphocholine + H2O = 1-dodecanoyl-sn-glycerol + phosphocholine + H(+). The enzyme catalyses 1-hexadecanoyl-sn-glycero-3-phosphocholine + H2O = 1-hexadecanoyl-sn-glycerol + phosphocholine + H(+). It catalyses the reaction 1-(5Z,8Z,11Z,14Z-eicosatetraenoyl)-sn-glycero-3-phosphocholine + H2O = 1-(5Z,8Z,11Z,14Z-eicosatetraenoyl)-sn-glycerol + phosphocholine + H(+). The catalysed reaction is 1-tetradecanoyl-sn-glycero-3-phosphocholine + H2O = 1-tetradecanoyl-sn-glycerol + phosphocholine + H(+). It carries out the reaction sphing-4-enine-phosphocholine + H2O = sphing-4-enine + phosphocholine + H(+). The enzyme catalyses 1-(9Z-octadecenoyl)-sn-glycero-3-phosphocholine + H2O = 1-(9Z-octadecenoyl)-sn-glycerol + phosphocholine + H(+). It catalyses the reaction 1-(9Z,12Z)-octadecadienoyl-sn-glycero-3-phosphocholine + H2O = 1-(9Z,12Z-octadecadienoyl)-sn-glycerol + phosphocholine + H(+). The catalysed reaction is glycero-2-phosphocholine + H2O = phosphocholine + glycerol + H(+). With respect to regulation, inhibited by EDTA and EGTA in vitro. Its function is as follows. Choline-specific glycerophosphodiesterase that hydrolyzes glycerophosphocholine (GPC) and lysophosphatidylcholine (LPC) and contributes to supplying choline to the cells. Has a preference for LPC with short (12:0 and 14:0) or polyunsaturated (18:2 and 20:4) fatty acids. In vitro, hydrolyzes only choline-containing lysophospholipids, such as sphingosylphosphorylcholine (SPC), platelet-activating factor (PAF) and lysoPAF, but not other lysophospholipids. The sequence is that of Glycerophosphocholine choline phosphodiesterase ENPP6 from Bos taurus (Bovine).